The chain runs to 304 residues: MSWIERIKSNITPTRKASIPEGVWTKCDSCGQVLYRAELERNLEVCPKCDHHMRMTARNRLHSLLDEGSLVELGSELEPKDVLKFRDSKKYKDRLASAQKETGEKDALVVMKGTLYGMPVVAAAFEFAFMGGSMGSVVGARFVRAVEQALEDNCPLICFSASGGARMQEALMSLMQMAKTSAALAKMQERGLPYISVLTDPTMGGVSASFAMLGDLNIAEPKALIGFAGPRVIEQTVREKLPLGFQRSEFLIEKGAIDMIVRRPEMRLKLASILAKLMNLPAPNPEAPREGVVVPPVPDQEPEA.

The 270-residue stretch at 23–292 (VWTKCDSCGQ…PNPEAPREGV (270 aa)) folds into the CoA carboxyltransferase N-terminal domain. Zn(2+) is bound by residues Cys-27, Cys-30, Cys-46, and Cys-49. A C4-type zinc finger spans residues 27–49 (CDSCGQVLYRAELERNLEVCPKC). Residues 284–304 (NPEAPREGVVVPPVPDQEPEA) are disordered. The span at 295–304 (PPVPDQEPEA) shows a compositional bias: pro residues.

The protein belongs to the AccD/PCCB family. Acetyl-CoA carboxylase is a heterohexamer composed of biotin carboxyl carrier protein (AccB), biotin carboxylase (AccC) and two subunits each of ACCase subunit alpha (AccA) and ACCase subunit beta (AccD). Zn(2+) serves as cofactor.

Its subcellular location is the cytoplasm. The enzyme catalyses N(6)-carboxybiotinyl-L-lysyl-[protein] + acetyl-CoA = N(6)-biotinyl-L-lysyl-[protein] + malonyl-CoA. Its pathway is lipid metabolism; malonyl-CoA biosynthesis; malonyl-CoA from acetyl-CoA: step 1/1. Component of the acetyl coenzyme A carboxylase (ACC) complex. Biotin carboxylase (BC) catalyzes the carboxylation of biotin on its carrier protein (BCCP) and then the CO(2) group is transferred by the transcarboxylase to acetyl-CoA to form malonyl-CoA. This Shigella boydii serotype 18 (strain CDC 3083-94 / BS512) protein is Acetyl-coenzyme A carboxylase carboxyl transferase subunit beta.